Here is a 338-residue protein sequence, read N- to C-terminus: MYVLVTGGSGYIGSHTCVQLIEAGYKPVILDNLCNSKSSVLARIHSLTGYTPELYAGDIRDRTLLDSIFAAHPIHAVIHFAGLKAVGESVNRPLEYYNNNVFGTLVLLEAMRAAQVKNLIFSSSATVYGDQPQIPYVESFPTGSPSSPYGRSKLMVEQILQDVQLADPQWNMTILRYFNPVGAHPSGLMGEDPQGIPNNLMPFIAQVAVGRRESLAIFGNGYPTPDGTGVRDYIHVVDLADGHVAAMKTLHGKPGVHIFNLGAGVGHSVLQVVAAFSKACGKPLAYHFAPRREGDLPAYWADATKAAEQLGWRVSRSLDEMAADTWHWQSKNPQGYPD.

NAD(+) contacts are provided by residues 11–12, 31–36, 58–59, 80–84, asparagine 99, serine 124, tyrosine 149, lysine 153, and phenylalanine 178; these read YI, DNLCNS, DI, and FAGLK. The substrate site is built by serine 124 and tyrosine 149. Catalysis depends on tyrosine 149, which acts as the Proton acceptor. Substrate-binding positions include asparagine 179, 199–200, 216–218, arginine 231, 292–295, and tyrosine 299; these read NL, AIF, and REGD.

Belongs to the NAD(P)-dependent epimerase/dehydratase family. In terms of assembly, homodimer. Requires NAD(+) as cofactor.

The catalysed reaction is UDP-alpha-D-glucose = UDP-alpha-D-galactose. The protein operates within carbohydrate metabolism; galactose metabolism. Involved in the metabolism of galactose. Catalyzes the conversion of UDP-galactose (UDP-Gal) to UDP-glucose (UDP-Glc) through a mechanism involving the transient reduction of NAD. This Yersinia pestis protein is UDP-glucose 4-epimerase (galE).